Reading from the N-terminus, the 542-residue chain is Probable protein kinase UbiB (542 aa).

The 383-residue stretch at 123–505 folds into the Protein kinase domain; it reads DFDEQALASA…ADNKTYNVKM (383 aa). Residues 129-137 and Lys-156 each bind ATP; that span reads LASASIAQV. Asp-291 functions as the Proton acceptor in the catalytic mechanism. Residues 506 to 526 traverse the membrane as a helical segment; that stretch reads IIMGSIILSLLWQFNSLPLWL.

It belongs to the ABC1 family. UbiB subfamily.

Its subcellular location is the cell inner membrane. It functions in the pathway cofactor biosynthesis; ubiquinone biosynthesis [regulation]. Its function is as follows. Is probably a protein kinase regulator of UbiI activity which is involved in aerobic coenzyme Q (ubiquinone) biosynthesis. The sequence is that of Probable protein kinase UbiB from Haemophilus ducreyi (strain 35000HP / ATCC 700724).